A 440-amino-acid polypeptide reads, in one-letter code: Argininosuccinate lyase (440 aa).

This sequence belongs to the lyase 1 family. Argininosuccinate lyase subfamily.

It is found in the cytoplasm. It catalyses the reaction 2-(N(omega)-L-arginino)succinate = fumarate + L-arginine. It functions in the pathway amino-acid biosynthesis; L-arginine biosynthesis; L-arginine from L-ornithine and carbamoyl phosphate: step 3/3. This Clostridium botulinum (strain Langeland / NCTC 10281 / Type F) protein is Argininosuccinate lyase.